The sequence spans 739 residues: Transcription regulator protein BACH1 (739 aa).

One can recognise a BTB domain in the interval 34–100; sequence CDVTVLVEGQ…AYTAKLILSK (67 aa). A Phosphoserine modification is found at serine 196. 2 disordered regions span residues 287–321 and 344–391; these read MESE…PHGL and KTVK…RSSV. Basic and acidic residues-rich tracts occupy residues 346-364 and 376-391; these read VKTE…KPSE and PKED…RSSV. Serine 448 carries the phosphoserine modification. The 64-residue stretch at 560–623 folds into the bZIP domain; the sequence is CIHDIRRRSK…GETKQNLTGL (64 aa). A basic motif region spans residues 565–581; that stretch reads RRRSKNRIAAQRCRKRK. Residues 585-592 are leucine-zipper; that stretch reads IQNLESEI. The interval 679–708 is disordered; that stretch reads PPTAPPPCGRGSSAASQELVQESPPTTAAA. Residues 699 to 708 show a composition bias toward low complexity; that stretch reads QESPPTTAAA.

It belongs to the bZIP family. CNC subfamily. Heterodimer of BACH1 and MAFK. Ubiquitinated by the SCF(FBXL17) complex or by the by the SCF(FBXO22) complex, leading to its degradation by the proteasome. Under oxidative stress, reactive oxygen species covalently modify cysteine residues on the bZIP domain of BACH1 and release it from chromatin. If the BTB domain of BACH1 remains intact, its beta1-alpha6 degron is recognized by FBXO22, promoting its ubiquitination and degradation. If the structural integrity of the beta1-alpha6 degron is compromised, FBXL17 will transiently associate with the BACH1 BTB dimer and remodel it into stably bound monomer for ubiquitination and degradation. In terms of tissue distribution, ubiquitous.

The protein resides in the nucleus. Its function is as follows. Transcriptional regulator that acts as a repressor or activator, depending on the context. Binds to NF-E2 DNA binding sites. Plays important roles in coordinating transcription activation and repression by MAFK. Together with MAF, represses the transcription of genes under the control of the NFE2L2 oxidative stress pathway. This chain is Transcription regulator protein BACH1 (Bach1), found in Mus musculus (Mouse).